The primary structure comprises 291 residues: Potassium-transporting ATPase subunit beta (291 aa).

The Cytoplasmic segment spans residues 1–36 (MAALQEKKSCSQRMEEFRHYCWNPDTGQMLGRTLSR). A helical; Signal-anchor for type II membrane protein membrane pass occupies residues 37–57 (WVWISLYYVAFYVVMTGLFAL). The Extracellular segment spans residues 58 to 291 (CIYVLMQTID…KVEFKLKIQK (234 aa)). N-linked (GlcNAc...) asparagine glycosylation is found at Asn99, Asn103, Asn130, Asn146, and Asn161. A disulfide bond links Cys131 and Cys152. Cys162 and Cys178 are joined by a disulfide. Residues Asn193 and Asn222 are each glycosylated (N-linked (GlcNAc...) asparagine). An immunoglobulin-like region spans residues 194 to 291 (STPPRVDCTF…KVEFKLKIQK (98 aa)). Cys201 and Cys263 form a disulfide bridge.

Belongs to the X(+)/potassium ATPases subunit beta family. The ATPase pump is composed of two subunits: alpha (catalytic) and beta (regulatory). Interacts with alpha subunit ATP12A; this interaction is required for the formation of a functionally active pump and targeting at the plasma membrane. Interacts (via N-terminus) with alpha subunit ATP4A (via the P-domain). In terms of processing, N-glycosylation is necessary for assembly and functional expression of the pump at the plasma membrane.

The protein resides in the apical cell membrane. Its subcellular location is the cell membrane. Functionally, the beta subunit of the gastric H(+)/K(+) ATPase pump which transports H(+) ions in exchange for K(+) ions across the apical membrane of parietal cells. Plays a structural and regulatory role in the assembly and membrane targeting of a functionally active pump. Within a transport cycle, the transfer of a H(+) ion across the membrane is coupled to ATP hydrolysis and is associated with a transient phosphorylation of the alpha subunit that shifts the pump conformation from inward-facing (E1) to outward-facing state (E2). Interacts with the phosphorylation domain of the alpha subunit and functions as a ratchet, stabilizing the lumenal-open E2 conformation and preventing the reverse reaction of the transport cycle. This chain is Potassium-transporting ATPase subunit beta (ATP4B), found in Oryctolagus cuniculus (Rabbit).